The primary structure comprises 577 residues: Arginine--tRNA ligase (577 aa).

The 'HIGH' region motif lies at 122–132 (PNVAKEMHVGH).

The protein belongs to the class-I aminoacyl-tRNA synthetase family. Monomer.

Its subcellular location is the cytoplasm. It carries out the reaction tRNA(Arg) + L-arginine + ATP = L-arginyl-tRNA(Arg) + AMP + diphosphate. This chain is Arginine--tRNA ligase, found in Edwardsiella ictaluri (strain 93-146).